The following is a 31-amino-acid chain: Cyclotide vico-B (31 aa).

Positions 1 to 31 (GSIPCAESCVYIPCITGIAGCSCKNKVCYYN) form a cross-link, cyclopeptide (Gly-Asn). Disulfide bonds link C5–C21, C9–C23, and C14–C28.

Belongs to the cyclotide family. Bracelet subfamily. This is a cyclic peptide.

Probably participates in a plant defense mechanism. The polypeptide is Cyclotide vico-B (Viola cotyledon (Violeta)).